Reading from the N-terminus, the 300-residue chain is UPF0282 protein TGAM_0379 (300 aa).

Belongs to the UPF0282 family.

In Thermococcus gammatolerans (strain DSM 15229 / JCM 11827 / EJ3), this protein is UPF0282 protein TGAM_0379.